Consider the following 51-residue polypeptide: MTIKNKTINLIENKKPVVYPIFTFRWLAVHALAVPTVFFIGSITSMQFIQR.

The chain crosses the membrane as a helical span at residues 26–42; the sequence is WLAVHALAVPTVFFIGS. Residue His-30 coordinates heme.

The protein belongs to the PsbE/PsbF family. As to quaternary structure, heterodimer of an alpha subunit and a beta subunit. PSII is composed of 1 copy each of membrane proteins PsbA, PsbB, PsbC, PsbD, PsbE, PsbF, PsbH, PsbI, PsbJ, PsbK, PsbL, PsbM, PsbT, PsbY, PsbZ, Psb30/Ycf12, at least 3 peripheral proteins of the oxygen-evolving complex and a large number of cofactors. It forms dimeric complexes. Heme b serves as cofactor.

Its subcellular location is the plastid. The protein resides in the chloroplast thylakoid membrane. Functionally, this b-type cytochrome is tightly associated with the reaction center of photosystem II (PSII). PSII is a light-driven water:plastoquinone oxidoreductase that uses light energy to abstract electrons from H(2)O, generating O(2) and a proton gradient subsequently used for ATP formation. It consists of a core antenna complex that captures photons, and an electron transfer chain that converts photonic excitation into a charge separation. The chain is Cytochrome b559 subunit beta from Bigelowiella natans (Pedinomonas minutissima).